The sequence spans 402 residues: S-adenosylmethionine synthase (402 aa).

137-142 (GQGSAD) is a binding site for ATP.

The protein belongs to the AdoMet synthase 2 family. It depends on Mg(2+) as a cofactor.

The catalysed reaction is L-methionine + ATP + H2O = S-adenosyl-L-methionine + phosphate + diphosphate. The protein operates within amino-acid biosynthesis; S-adenosyl-L-methionine biosynthesis; S-adenosyl-L-methionine from L-methionine: step 1/1. In terms of biological role, catalyzes the formation of S-adenosylmethionine from methionine and ATP. The sequence is that of S-adenosylmethionine synthase from Pyrobaculum neutrophilum (strain DSM 2338 / JCM 9278 / NBRC 100436 / V24Sta) (Thermoproteus neutrophilus).